Consider the following 155-residue polypeptide: Putative pre-16S rRNA nuclease (155 aa).

It belongs to the YqgF nuclease family.

The protein localises to the cytoplasm. Functionally, could be a nuclease involved in processing of the 5'-end of pre-16S rRNA. This is Putative pre-16S rRNA nuclease from Wolbachia sp. subsp. Drosophila simulans (strain wRi).